The primary structure comprises 208 residues: Large ribosomal subunit protein uL4 (208 aa).

The segment covering 47–58 (ARAARERSDVAR) has biased composition (basic and acidic residues). Positions 47–84 (ARAARERSDVARTGKKFGRQKGGGTARHGDRRAPIFIG) are disordered.

It belongs to the universal ribosomal protein uL4 family. As to quaternary structure, part of the 50S ribosomal subunit.

In terms of biological role, one of the primary rRNA binding proteins, this protein initially binds near the 5'-end of the 23S rRNA. It is important during the early stages of 50S assembly. It makes multiple contacts with different domains of the 23S rRNA in the assembled 50S subunit and ribosome. Functionally, forms part of the polypeptide exit tunnel. The sequence is that of Large ribosomal subunit protein uL4 from Sphingopyxis alaskensis (strain DSM 13593 / LMG 18877 / RB2256) (Sphingomonas alaskensis).